The sequence spans 420 residues: MIMEKGMNSGEGLPSRSSQASAAKVTVKELETQQPCKEKRGGFVLVHAGAGYHSESKAKEYKHVCKRACQKAIEKLQAGALATDAVAAALVELEDSPFTNAGIGSNLNLLGEIECDASIMDGKSLNFGAVGALSGIKNPVSVAHRLLCEGQKGKLSAGRIPPCFLVGEGAYRWAVDHGIPSCPPSTMTTRFSLAAFKRNKRKLELAERVETDFIQLKRRRQSSAKENDSGTLDTVGAVVVDHEGNVAAAVSSGGLALKHPGRVGQAALYGCGCWAENTGAQNPYSTAVSTSGCGEHLVRTILARECSHALQAEDAHQALLETMQNKFISSPFLACEDGVLGGVIVLRSCRCSSESDSSQDKQTLLVEFLWSHTTESMCVGYMSAQDGKAKTHISRLPPGAVAGQSVAIEGGVCRLESPVN.

The disordered stretch occupies residues 1 to 25 (MIMEKGMNSGEGLPSRSSQASAAKV). T234 functions as the Nucleophile in the catalytic mechanism.

Belongs to the Ntn-hydrolase family. In terms of assembly, intramolecular proteolysis generates 2 subunits, alpha and beta, which reassemble through a non-covalent association to form the fully active enzyme.

Its function is as follows. Protease responsible for KMT2A/MLL1 and KMT2D/MLL2 processing and activation. Through substrate activation, it controls the expression of HOXA genes, and the expression of key cell cycle regulators including CCNA1, CCNB1, CCNE1 and CDKN2A. The chain is Threonine aspartase 1 (Tasp1) from Mus musculus (Mouse).